Here is a 150-residue protein sequence, read N- to C-terminus: Large ribosomal subunit protein uL11 (150 aa).

Belongs to the universal ribosomal protein uL11 family. In terms of assembly, part of the ribosomal stalk of the 50S ribosomal subunit. Interacts with L10 and the large rRNA to form the base of the stalk. L10 forms an elongated spine to which L12 dimers bind in a sequential fashion forming a multimeric L10(L12)X complex. Post-translationally, one or more lysine residues are methylated.

In terms of biological role, forms part of the ribosomal stalk which helps the ribosome interact with GTP-bound translation factors. This Azobacteroides pseudotrichonymphae genomovar. CFP2 protein is Large ribosomal subunit protein uL11.